A 168-amino-acid polypeptide reads, in one-letter code: Protein-export protein SecB (168 aa).

It belongs to the SecB family. In terms of assembly, homotetramer, a dimer of dimers. One homotetramer interacts with 1 SecA dimer.

It localises to the cytoplasm. In terms of biological role, one of the proteins required for the normal export of preproteins out of the cell cytoplasm. It is a molecular chaperone that binds to a subset of precursor proteins, maintaining them in a translocation-competent state. It also specifically binds to its receptor SecA. The protein is Protein-export protein SecB of Sinorhizobium medicae (strain WSM419) (Ensifer medicae).